The following is a 326-amino-acid chain: Transposase InsH for insertion sequence element IS5Y (326 aa).

Belongs to the transposase 11 family.

Involved in the transposition of the insertion sequence IS5. The chain is Transposase InsH for insertion sequence element IS5Y (insH5) from Escherichia coli (strain K12).